Consider the following 330-residue polypeptide: Erlin-2-B (330 aa).

Over 1 to 2 the chain is Cytoplasmic; it reads MS. The chain crosses the membrane as a helical span at residues 3 to 23; that stretch reads HAGAIAALGVALIAAALFSAI. Over 24 to 330 the chain is Lumenal; it reads HKIEEGHVGV…NEPAAAEELK (307 aa). N106 carries N-linked (GlcNAc...) asparagine glycosylation. Positions 308 to 330 are disordered; it reads SSSAGPRVQSAKRNEPAAAEELK. Residues 319–330 are compositionally biased toward basic and acidic residues; the sequence is KRNEPAAAEELK.

Belongs to the band 7/mec-2 family.

Its subcellular location is the endoplasmic reticulum membrane. Its function is as follows. Mediates the endoplasmic reticulum-associated degradation (ERAD) of inositol 1,4,5-trisphosphate receptors (IP3Rs). Promotes sterol-accelerated ERAD of HMGCR. Involved in regulation of cellular cholesterol homeostasis by regulation the SREBP signaling pathway. In Xenopus laevis (African clawed frog), this protein is Erlin-2-B (erlin2-b).